A 159-amino-acid chain; its full sequence is Cyclic pyranopterin monophosphate synthase (159 aa).

Residues 75 to 77 (LCH) and 113 to 114 (ME) each bind substrate. Residue aspartate 128 is part of the active site.

It belongs to the MoaC family. As to quaternary structure, homohexamer; trimer of dimers.

It catalyses the reaction (8S)-3',8-cyclo-7,8-dihydroguanosine 5'-triphosphate = cyclic pyranopterin phosphate + diphosphate. It participates in cofactor biosynthesis; molybdopterin biosynthesis. Functionally, catalyzes the conversion of (8S)-3',8-cyclo-7,8-dihydroguanosine 5'-triphosphate to cyclic pyranopterin monophosphate (cPMP). This chain is Cyclic pyranopterin monophosphate synthase, found in Cupriavidus metallidurans (strain ATCC 43123 / DSM 2839 / NBRC 102507 / CH34) (Ralstonia metallidurans).